Reading from the N-terminus, the 86-residue chain is Maxadilan (86 aa).

Positions 1 to 23 (MKQILLISLVVVLAVFAFNVAEG) are cleaved as a signal peptide. Cystine bridges form between C24/C28 and C37/C74.

As to quaternary structure, interacts with human ADCYAP1R1. In terms of tissue distribution, salivary gland (at protein level).

The protein localises to the secreted. Functionally, potent vasodilator. Activates mammalian ADCYAP1R1, a PAC1 receptor, and induces cAMP accumulation in host cells. Causes the development of erythema following superficial injection into the rabbit or human skin. Influences adaptive immune responses mediated by host dendritic cells. Reduces surface expression of CD80 on host dendritic cells stimulated with lipopolysaccharides (LPS) and induces concomitant increase in CD86 expression on a subpopulation of these cells. Redirects cytokine secretion by LPS-activated host dendritic cells toward type 2 responses: decreases secretion of TNF-alpha/TNF, IL-12p40/IL12B and IFN-gamma/IFNG, and increases secretion of IL6 and IL10. Reduces ability of host bone marrow-derived dendritic cells to stimulate proliferation of CD4(+) T-cells. Reprograms the effect of LPS-activated host dendritic cells on cytokine secretion profiles in host T-cells: decreases secretion of TNF-alpha/TNF and IFN-gamma/IFNG, increases secretion of IL6 and IL13, and increases secretion of pro-inflammatory cytokine IL-1beta/IL1B in mixed lymphocyte reaction (MLR) cultures. Reduces LPS-induced up-regulation of CCR7 in activated host dendritic cells. Inhibits IFN-gamma/IFNG and IL-12p40/IL12B production by human peripheral blood mononuclear cells. Increases IL6 and decreases TNF-alpha/TNF production by LPS-stimulated human monocytes. Its function is as follows. (Microbial infection) Probably plays a critical role in the enhancement of Leishmania infectivity in the host attributed to sand fly saliva. The sequence is that of Maxadilan from Lutzomyia longipalpis (Sand fly).